We begin with the raw amino-acid sequence, 202 residues long: MTRPLVGVLALQGDVREHLAALNDSGADAVGIRRPEELEKIDGLVIPGGESTTMSKLLQIFELLEPLKARLRDGLPAYGSCAGMILLASEILDTRPDAQHLGAIDMTVRRNAFGRQVDSFESDLEFEGIVGDPMRAVFIRAPWVERVGDDVQILARVPESGGAAAGRIVAVRQGSVVATSFHPEVTGDRRVHELFVDIVRGV.

49-51 (GES) contributes to the L-glutamine binding site. Catalysis depends on Cys81, which acts as the Nucleophile. L-glutamine contacts are provided by residues Arg110 and 139-140 (IR). Catalysis depends on charge relay system residues His182 and Glu184.

Belongs to the glutaminase PdxT/SNO family. In terms of assembly, in the presence of PdxS, forms a dodecamer of heterodimers. Only shows activity in the heterodimer.

The catalysed reaction is aldehydo-D-ribose 5-phosphate + D-glyceraldehyde 3-phosphate + L-glutamine = pyridoxal 5'-phosphate + L-glutamate + phosphate + 3 H2O + H(+). The enzyme catalyses L-glutamine + H2O = L-glutamate + NH4(+). It functions in the pathway cofactor biosynthesis; pyridoxal 5'-phosphate biosynthesis. Catalyzes the hydrolysis of glutamine to glutamate and ammonia as part of the biosynthesis of pyridoxal 5'-phosphate. The resulting ammonia molecule is channeled to the active site of PdxS. The sequence is that of Pyridoxal 5'-phosphate synthase subunit PdxT from Rhodococcus opacus (strain B4).